The chain runs to 986 residues: MATPRAQKFNPIAFTPGPVTLITTIVYLALLIPILVISLVVPPAPETSPEGVNLTEAWRDLQHLTGGFHPYNSRRNDDVHQWLLRRIDSILRPTVEAGERPSANNDIPDVFVFDDNQSNLTYSNGGVGKAAIVGVYFEGTNIIVYIRGTEDDPENWWERSNGKPKGKGGVLVNAHYDSVSTGYGATDNGMGVVSLLQLLKYFTTPGNKPRKGLVLLFNNGEEDYLNGAHVFSQHPLSNFTHTFLNLEGAGAGGRAALFRTTDTEVTRFYQNAKHPFGSVLAADGFKMGLLRSQTDYVVFNGILGLRGLDLAFIAPRSRYHTDQDDARHTSVDSLWHMLSAAIGTTEGLVSYTGTDFDGKSQGLDKVNSGTGTLGVWFDMFGSAFAVFRLHTLFALSVTLLIVAPLVIFITAIVLSKTDRMYLFSMSKSLGGTDERVSLRGLRGLFRTPIILAVATVIPIGLAYLLEKVNPYIVHSSQFSVWSMMISVWIFLAWFLACAADFFRPSALHRAYSYTWIFIATWVMLVINTVYANQKGIAAGYFVFFYFSGSFLATWVSYLELFALPRKGDFARQAIMHSGRPPSSLRSRLLTPSADELPSDTGPHAEYPGDADETDPTESTSLLRGQRTTFANYRTGGTDGVVEGTDEGPSFKHEQSWSWTLPRWTWVLQLLLLAPIVLILVGQLALFLTTSMSQVGSDGVSTFIVYLACAVFTTLLFAPLFPFIHRFTYHIPTFLFLVFVGTLIYNLVAFPFSPANRLKMFFIQEVNLDDGSNTVSLSGIQPYLTDAINSIPSAAGQNITCDQSAFGKLEKCSWAGLPPRVLGQDHDRDTGIVSSDWMSYNITKTVGENKARIEISGRNTRACKLKFDKPVADFQVSGSAVDHRMPHTSGQGVAEIRLWSRTWDRTWVVDICWHDSHDKPEDDDGDDEKQDAPRNGLSGKVICLWSDSNQSDVIPALDELRLYTPNWVAISKSADGLVEASHGITIQ.

Topologically, residues 1–20 (MATPRAQKFNPIAFTPGPVT) are cytoplasmic. A helical membrane pass occupies residues 21 to 41 (LITTIVYLALLIPILVISLVV). The Vacuolar portion of the chain corresponds to 42-392 (PPAPETSPEG…AFAVFRLHTL (351 aa)). N-linked (GlcNAc...) asparagine glycosylation is found at Asn53, Asn116, and Asn119. The Zn(2+) site is built by His175 and Asp187. Glu221 functions as the Proton acceptor in the catalytic mechanism. Glu222 serves as a coordination point for Zn(2+). Residue Asn238 is glycosylated (N-linked (GlcNAc...) asparagine). Zn(2+)-binding residues include Glu247 and His320. Residues 393–413 (FALSVTLLIVAPLVIFITAIV) traverse the membrane as a helical segment. Topologically, residues 414–447 (LSKTDRMYLFSMSKSLGGTDERVSLRGLRGLFRT) are cytoplasmic. The helical transmembrane segment at 448–468 (PIILAVATVIPIGLAYLLEKV) threads the bilayer. At 469-477 (NPYIVHSSQ) the chain is on the vacuolar side. A helical membrane pass occupies residues 478 to 498 (FSVWSMMISVWIFLAWFLACA). At 499–509 (ADFFRPSALHR) the chain is on the cytoplasmic side. The chain crosses the membrane as a helical span at residues 510-530 (AYSYTWIFIATWVMLVINTVY). At 531–534 (ANQK) the chain is on the vacuolar side. The helical transmembrane segment at 535–555 (GIAAGYFVFFYFSGSFLATWV) threads the bilayer. The Cytoplasmic segment spans residues 556–665 (SYLELFALPR…WSWTLPRWTW (110 aa)). The interval 595–620 (ELPSDTGPHAEYPGDADETDPTESTS) is disordered. A helical membrane pass occupies residues 666-686 (VLQLLLLAPIVLILVGQLALF). At 687-702 (LTTSMSQVGSDGVSTF) the chain is on the vacuolar side. The helical transmembrane segment at 703–723 (IVYLACAVFTTLLFAPLFPFI) threads the bilayer. The Cytoplasmic segment spans residues 724-729 (HRFTYH). Residues 730–750 (IPTFLFLVFVGTLIYNLVAFP) traverse the membrane as a helical segment. The Vacuolar portion of the chain corresponds to 751-986 (FSPANRLKMF…VEASHGITIQ (236 aa)). Residues Asn797, Asn840, and Asn948 are each glycosylated (N-linked (GlcNAc...) asparagine).

Belongs to the peptidase M28 family. Requires Zn(2+) as cofactor.

The protein localises to the vacuole membrane. Functionally, may be involved in vacuolar sorting and osmoregulation. The sequence is that of Vacuolar membrane protease from Blastomyces gilchristii (strain SLH14081) (Blastomyces dermatitidis).